The sequence spans 193 residues: Putative manganese efflux pump MntP (193 aa).

Helical transmembrane passes span 3–23 (IFAV…VAVV), 41–61 (AAFG…GVSV), 69–89 (DHWI…LSGL), 107–127 (AGRN…AVGL), 130–150 (AILG…CAVI), and 164–184 (LCAL…AIAC).

Belongs to the MntP (TC 9.B.29) family.

The protein localises to the cell inner membrane. Functionally, probably functions as a manganese efflux pump. This is Putative manganese efflux pump MntP from Desulfovibrio desulfuricans (strain ATCC 27774 / DSM 6949 / MB).